The chain runs to 148 residues: Ribonuclease pancreatic (148 aa).

Residues 1–25 (MGLEKSLILFPLLVLVVGWVQPSLG) form the signal peptide. Substrate contacts are provided by residues Lys-32, Arg-35, 65-69 (KPVNT), Lys-90, and Arg-109. 4 disulfide bridges follow: Cys-50–Cys-108, Cys-64–Cys-119, Cys-82–Cys-134, and Cys-89–Cys-96. The Proton donor role is filled by His-143.

The protein belongs to the pancreatic ribonuclease family. In terms of assembly, monomer. Interacts with and forms tight 1:1 complexes with RNH1. Dimerization of two such complexes may occur. Interaction with RNH1 inhibits this protein. In terms of tissue distribution, pancreas.

Its subcellular location is the secreted. It carries out the reaction an [RNA] containing cytidine + H2O = an [RNA]-3'-cytidine-3'-phosphate + a 5'-hydroxy-ribonucleotide-3'-[RNA].. The enzyme catalyses an [RNA] containing uridine + H2O = an [RNA]-3'-uridine-3'-phosphate + a 5'-hydroxy-ribonucleotide-3'-[RNA].. Its function is as follows. Endonuclease that catalyzes the cleavage of RNA on the 3' side of pyrimidine nucleotides. Acts on single-stranded and double-stranded RNA. The sequence is that of Ribonuclease pancreatic (RNASE1) from Peromyscus leucopus (White-footed mouse).